The following is a 483-amino-acid chain: tRNA-2-methylthio-N(6)-dimethylallyladenosine synthase (483 aa).

The MTTase N-terminal domain maps to 31–148 (KKLYIETQGC…LPQMLDQHHA (118 aa)). Residues cysteine 40, cysteine 77, cysteine 111, cysteine 192, cysteine 196, and cysteine 199 each contribute to the [4Fe-4S] cluster site. One can recognise a Radical SAM core domain in the interval 178-410 (RVEGFKAFVS…QQVIKQSSIE (233 aa)). A TRAM domain is found at 413–477 (DAMLGKIERV…LNLVYGELLN (65 aa)).

It belongs to the methylthiotransferase family. MiaB subfamily. As to quaternary structure, monomer. [4Fe-4S] cluster is required as a cofactor.

The protein localises to the cytoplasm. It carries out the reaction N(6)-dimethylallyladenosine(37) in tRNA + (sulfur carrier)-SH + AH2 + 2 S-adenosyl-L-methionine = 2-methylsulfanyl-N(6)-dimethylallyladenosine(37) in tRNA + (sulfur carrier)-H + 5'-deoxyadenosine + L-methionine + A + S-adenosyl-L-homocysteine + 2 H(+). Its function is as follows. Catalyzes the methylthiolation of N6-(dimethylallyl)adenosine (i(6)A), leading to the formation of 2-methylthio-N6-(dimethylallyl)adenosine (ms(2)i(6)A) at position 37 in tRNAs that read codons beginning with uridine. The polypeptide is tRNA-2-methylthio-N(6)-dimethylallyladenosine synthase (Acinetobacter baumannii (strain AB0057)).